The primary structure comprises 173 residues: NADH-ubiquinone oxidoreductase chain 6 (173 aa).

6 helical membrane passes run 1–21 (MTYFVVFLGLCFVLGGLAVAS), 27–47 (YGVVGLVLASVAGCGWLLSLG), 48–68 (VSFVSLVLFMVYLGGMLVVFV), 87–107 (VVGYGMSFIVVLVVGVVVGGF), 113–133 (FGVVTVDSAGVFFARLDFSGV), and 139–159 (CGVGMFLVAGWGLLLTLFVVL).

This sequence belongs to the complex I subunit 6 family.

It localises to the mitochondrion membrane. The catalysed reaction is a ubiquinone + NADH + 5 H(+)(in) = a ubiquinol + NAD(+) + 4 H(+)(out). Core subunit of the mitochondrial membrane respiratory chain NADH dehydrogenase (Complex I) that is believed to belong to the minimal assembly required for catalysis. Complex I functions in the transfer of electrons from NADH to the respiratory chain. The immediate electron acceptor for the enzyme is believed to be ubiquinone. The chain is NADH-ubiquinone oxidoreductase chain 6 (MT-ND6) from Cepphus grylle (Black guillemot).